The sequence spans 1002 residues: SIT4-associating protein SAP155 (1002 aa).

Disordered stretches follow at residues Gly-51–Met-131, Gln-214–Asp-273, Glu-609–Tyr-645, Asp-868–Gln-901, and Asn-940–Glu-1002. Ser-58 is modified (phosphoserine). A compositionally biased stretch (basic and acidic residues) spans Glu-62 to Ser-97. Residues Met-98–Ser-114 are compositionally biased toward low complexity. A compositionally biased stretch (acidic residues) spans Ser-220–Asn-241. The residue at position 255 (Ser-255) is a Phosphoserine. The segment covering Asn-262–Asp-273 has biased composition (acidic residues). A compositionally biased stretch (basic and acidic residues) spans Glu-609–Lys-626. 2 positions are modified to phosphothreonine: Thr-613 and Thr-618. A compositionally biased stretch (acidic residues) spans Asp-635–Tyr-645. Residues Asp-868 to Ile-885 show a composition bias toward polar residues. The span at Ser-956–Asn-976 shows a compositional bias: low complexity. Positions Glu-991 to Glu-1002 are enriched in acidic residues.

It belongs to the SAPS family. As to quaternary structure, associates with the SIT4 protein phosphatase catalytic subunit in a cell-cycle-dependent manner. Hyperphosphorylated in the absence of SIT4.

It is found in the cytoplasm. Positive regulator of protein phosphatase SIT4. Involved in directing expression of TOR-repressed genes and in dephosphorylation of NPR1 in response to nutrient starvation. Negatively modulates K(+) efflux of the cell by the Na(+)-K(+)/H(+) antiporter NHA1. This is SIT4-associating protein SAP155 (SAP155) from Saccharomyces cerevisiae (strain ATCC 204508 / S288c) (Baker's yeast).